Consider the following 384-residue polypeptide: Substance-K receptor (384 aa).

The Extracellular portion of the chain corresponds to methionine 1 to glutamine 32. N-linked (GlcNAc...) asparagine glycosylation is present at asparagine 19. A helical transmembrane segment spans residues leucine 33–tryptophan 56. At isoleucine 57–asparagine 69 the chain is on the cytoplasmic side. Residues tyrosine 70 to asparagine 90 form a helical membrane-spanning segment. The Extracellular segment spans residues phenylalanine 91–tyrosine 107. A disulfide bridge connects residues cysteine 106 and cysteine 181. The chain crosses the membrane as a helical span at residues phenylalanine 108–alanine 129. The Cytoplasmic portion of the chain corresponds to aspartate 130 to lysine 149. The chain crosses the membrane as a helical span at residues alanine 150 to serine 170. The Extracellular portion of the chain corresponds to threonine 171 to leucine 196. A helical transmembrane segment spans residues tyrosine 197–serine 218. Over valine 219–alanine 251 the chain is Cytoplasmic. The chain crosses the membrane as a helical span at residues methionine 252 to leucine 272. At glycine 273 to leucine 290 the chain is on the extracellular side. The helical transmembrane segment at alanine 291–leucine 310 threads the bilayer. Residues asparagine 311–proline 384 lie on the Cytoplasmic side of the membrane. Cysteine 324 carries the S-palmitoyl cysteine lipid modification. Residues histidine 365–proline 384 are disordered.

This sequence belongs to the G-protein coupled receptor 1 family.

The protein resides in the cell membrane. This is a receptor for the tachykinin neuropeptide substance K (neurokinin A). It is associated with G proteins that activate a phosphatidylinositol-calcium second messenger system. The rank order of affinity of this receptor to tachykinins is: substance K &gt; neuromedin-K &gt; substance P. The chain is Substance-K receptor (Tacr2) from Mus musculus (Mouse).